We begin with the raw amino-acid sequence, 188 residues long: Elongation factor P (188 aa).

It belongs to the elongation factor P family.

It is found in the cytoplasm. Its pathway is protein biosynthesis; polypeptide chain elongation. Involved in peptide bond synthesis. Stimulates efficient translation and peptide-bond synthesis on native or reconstituted 70S ribosomes in vitro. Probably functions indirectly by altering the affinity of the ribosome for aminoacyl-tRNA, thus increasing their reactivity as acceptors for peptidyl transferase. The sequence is that of Elongation factor P from Rhodopseudomonas palustris (strain HaA2).